The sequence spans 261 residues: Enolase-phosphatase E1 (261 aa).

Mg(2+)-binding residues include aspartate 16 and glutamate 18. Residues 150-151 (SS) and lysine 184 each bind substrate. Aspartate 209 contributes to the Mg(2+) binding site.

It belongs to the HAD-like hydrolase superfamily. MasA/MtnC family. In terms of assembly, monomer. Mg(2+) serves as cofactor.

The protein localises to the cytoplasm. It is found in the nucleus. The catalysed reaction is 5-methylsulfanyl-2,3-dioxopentyl phosphate + H2O = 1,2-dihydroxy-5-(methylsulfanyl)pent-1-en-3-one + phosphate. Its pathway is amino-acid biosynthesis; L-methionine biosynthesis via salvage pathway; L-methionine from S-methyl-5-thio-alpha-D-ribose 1-phosphate: step 3/6. It participates in amino-acid biosynthesis; L-methionine biosynthesis via salvage pathway; L-methionine from S-methyl-5-thio-alpha-D-ribose 1-phosphate: step 4/6. Functionally, bifunctional enzyme that catalyzes the enolization of 2,3-diketo-5-methylthiopentyl-1-phosphate (DK-MTP-1-P) into the intermediate 2-hydroxy-3-keto-5-methylthiopentenyl-1-phosphate (HK-MTPenyl-1-P), which is then dephosphorylated to form the acireductone 1,2-dihydroxy-3-keto-5-methylthiopentene (DHK-MTPene). This is Enolase-phosphatase E1 (Enoph1) from Rattus norvegicus (Rat).